The sequence spans 92 residues: Small ribosomal subunit protein uS19c (92 aa).

The protein belongs to the universal ribosomal protein uS19 family.

It is found in the plastid. The protein resides in the chloroplast. Its function is as follows. Protein S19 forms a complex with S13 that binds strongly to the 16S ribosomal RNA. The sequence is that of Small ribosomal subunit protein uS19c from Huperzia lucidula (Shining clubmoss).